Reading from the N-terminus, the 150-residue chain is SsrA-binding protein (150 aa).

It belongs to the SmpB family.

The protein localises to the cytoplasm. Its function is as follows. Required for rescue of stalled ribosomes mediated by trans-translation. Binds to transfer-messenger RNA (tmRNA), required for stable association of tmRNA with ribosomes. tmRNA and SmpB together mimic tRNA shape, replacing the anticodon stem-loop with SmpB. tmRNA is encoded by the ssrA gene; the 2 termini fold to resemble tRNA(Ala) and it encodes a 'tag peptide', a short internal open reading frame. During trans-translation Ala-aminoacylated tmRNA acts like a tRNA, entering the A-site of stalled ribosomes, displacing the stalled mRNA. The ribosome then switches to translate the ORF on the tmRNA; the nascent peptide is terminated with the 'tag peptide' encoded by the tmRNA and targeted for degradation. The ribosome is freed to recommence translation, which seems to be the essential function of trans-translation. This is SsrA-binding protein from Campylobacter jejuni subsp. jejuni serotype O:6 (strain 81116 / NCTC 11828).